We begin with the raw amino-acid sequence, 496 residues long: Transcription termination factor MTERF9, chloroplastic (496 aa).

A chloroplast-targeting transit peptide spans 1–44 (MAGFSLYCFKNPRILFTLPSESPLFVLGSDKCSPATRRPSRKTR). 2 disordered regions span residues 57–90 (IINP…DDDW) and 102–155 (YEKK…SWRL). Residues 74-90 (DSDEDDDDDDDDDDDDW) show a composition bias toward acidic residues. Basic residues predominate over residues 105-123 (KKPKSHKQTIAKKSVKKGI). Basic and acidic residues predominate over residues 146-155 (SEKKKESWRL).

The protein belongs to the mTERF family.

Its subcellular location is the plastid. It localises to the chloroplast. Functionally, transcription termination factor required for processing and steady-state levels of plastid transcripts. May play a role in response to abiotic stresses. The sequence is that of Transcription termination factor MTERF9, chloroplastic from Arabidopsis thaliana (Mouse-ear cress).